Here is a 620-residue protein sequence, read N- to C-terminus: Glutathione-regulated potassium-efflux system protein KefC (620 aa).

Helical transmembrane passes span 4-24, 26-46, 54-74, 90-110, 114-134, 149-169, 178-198, 218-238, 270-290, 294-314, 327-347, and 359-379; these read HTLIQALIYLGSAALIVPIAV, LGLGSVLGYLIAGCIIGPWGL, SILHFAEIGVVLMLFIIGLEL, GALQMVICGGLLGLFCMLLGL, VAELIGMTLALSSTAIAMQAM, FAVLLFQDIAAIPLVAMIPLL, MGAFALSALKVAGALVLVVLL, VFSAVALFLVFGFGLLLEEVG, GLLLGLFFIGVGMSIDFGTLL, LRIVILLLGFLIIKIAMLWLI, WFAVLLGQGSEFAFVVFGAAQ, and SLTLAVALSMAATPILLVILN. The 120-residue stretch at 399–518 folds into the RCK N-terminal domain; the sequence is QPRVIIAGFG…AGVEKPERET (120 aa). The interval 597–620 is disordered; that stretch reads GWQGTEEGKHTGNMADEPETKPSS.

The protein belongs to the monovalent cation:proton antiporter 2 (CPA2) transporter (TC 2.A.37) family. KefC subfamily. Homodimer. Interacts with the regulatory subunit KefF.

The protein localises to the cell inner membrane. In terms of biological role, pore-forming subunit of a potassium efflux system that confers protection against electrophiles. Catalyzes K(+)/H(+) antiport. This is Glutathione-regulated potassium-efflux system protein KefC from Escherichia coli O6:K15:H31 (strain 536 / UPEC).